A 79-amino-acid polypeptide reads, in one-letter code: UPF0349 protein BCE33L4669 (79 aa).

This sequence belongs to the UPF0349 family.

The chain is UPF0349 protein BCE33L4669 from Bacillus cereus (strain ZK / E33L).